A 785-amino-acid polypeptide reads, in one-letter code: uncharacterized protein (785 aa).

A compositionally biased stretch (polar residues) spans 53-65; it reads KNTLTGSHGSNDL. The interval 53–162 is disordered; that stretch reads KNTLTGSHGS…RKAADEQGPI (110 aa). Residues 66–79 are compositionally biased toward acidic residues; sequence ATDESLDSPEDEEA. The span at 81–94 shows a compositional bias: polar residues; that stretch reads SPLQLGTPTSTTSG. Ser215 is subject to Phosphoserine. Disordered stretches follow at residues 571–590 and 631–657; these read KVVDSDDEESDSDESVTSVN and DSSGRKLTPIESRNSRRSSKRSSRIQF. Residues 575 to 584 are compositionally biased toward acidic residues; the sequence is SDDEESDSDE. Position 667 is a phosphoserine (Ser667). The tract at residues 693–785 is disordered; sequence DPKMKFTSHP…FGSIFKKVFG (93 aa). Residues 725-739 are compositionally biased toward basic residues; sequence RKAHHHHHHHNHVSR. Over residues 776–785 the composition is skewed to low complexity; sequence FGSIFKKVFG.

This is an uncharacterized protein from Saccharomyces cerevisiae (strain ATCC 204508 / S288c) (Baker's yeast).